The following is a 293-amino-acid chain: Methylsterol monooxygenase 1 (293 aa).

A run of 2 helical transmembrane segments spans residues 55–75 (LIVH…FQFI) and 100–120 (KILF…YYFT). The Fatty acid hydroxylase domain occupies 144–274 (GCAVIEDTWH…FTWWDKLFGT (131 aa)). The Histidine box-1 motif lies at 157–161 (HRLLH). The Histidine box-2 motif lies at 170 to 174 (HKVHH). The helical transmembrane segment at 199 to 219 (FFIGIVLLCDHVILLWAWVTI) threads the bilayer. The Histidine box-3 signature appears at 249 to 255 (HHDFHHM).

Belongs to the sterol desaturase family. The cofactor is Fe cation. In terms of processing, ubiquitinated by MARCHF6, leading to proteasomal degradation.

It localises to the endoplasmic reticulum membrane. The enzyme catalyses 4,4-dimethyl-5alpha-cholest-7-en-3beta-ol + 6 Fe(II)-[cytochrome b5] + 3 O2 + 5 H(+) = 4alpha-carboxy-4beta-methyl-5alpha-cholest-7-ene-3beta-ol + 6 Fe(III)-[cytochrome b5] + 4 H2O. It carries out the reaction 4,4-dimethyl-5alpha-cholesta-8,24-dien-3beta-ol + 6 Fe(II)-[cytochrome b5] + 3 O2 + 5 H(+) = 4beta-methylzymosterol-4alpha-carboxylate + 6 Fe(III)-[cytochrome b5] + 4 H2O. The catalysed reaction is 4alpha-methylzymosterol + 6 Fe(II)-[cytochrome b5] + 3 O2 + 5 H(+) = 4alpha-carboxyzymosterol + 6 Fe(III)-[cytochrome b5] + 4 H2O. It catalyses the reaction 4alpha-methyl-5alpha-cholest-7-en-3beta-ol + 6 Fe(II)-[cytochrome b5] + 3 O2 + 5 H(+) = 4alpha-carboxy-5alpha-cholest-7-en-3beta-ol + 6 Fe(III)-[cytochrome b5] + 4 H2O. The enzyme catalyses 4,4-dimethyl-5alpha-cholest-8-en-3beta-ol + 6 Fe(II)-[cytochrome b5] + 3 O2 + 5 H(+) = 4alpha-carboxy-4beta-methyl-5alpha-cholest-8-en-3beta-ol + 6 Fe(III)-[cytochrome b5] + 4 H2O. It carries out the reaction 4alpha-methyl-5alpha-cholest-8-en-3beta-ol + 6 Fe(II)-[cytochrome b5] + 3 O2 + 5 H(+) = 4alpha-carboxy-5alpha-cholest-8-ene-3beta-ol + 6 Fe(III)-[cytochrome b5] + 4 H2O. The protein operates within steroid biosynthesis; zymosterol biosynthesis; zymosterol from lanosterol: step 3/6. It functions in the pathway steroid biosynthesis; cholesterol biosynthesis. Catalyzes the three-step monooxygenation required for the demethylation of 4,4-dimethyl and 4alpha-methylsterols, which can be subsequently metabolized to cholesterol. This chain is Methylsterol monooxygenase 1 (Msmo1), found in Mus musculus (Mouse).